We begin with the raw amino-acid sequence, 279 residues long: Acyl-[acyl-carrier-protein]--UDP-N-acetylglucosamine O-acyltransferase (279 aa).

Positions 260–279 are disordered; sequence AAKEAFQEESVDKEGALVES.

Belongs to the transferase hexapeptide repeat family. LpxA subfamily. Homotrimer.

The protein resides in the cytoplasm. It catalyses the reaction a (3R)-hydroxyacyl-[ACP] + UDP-N-acetyl-alpha-D-glucosamine = a UDP-3-O-[(3R)-3-hydroxyacyl]-N-acetyl-alpha-D-glucosamine + holo-[ACP]. Its pathway is glycolipid biosynthesis; lipid IV(A) biosynthesis; lipid IV(A) from (3R)-3-hydroxytetradecanoyl-[acyl-carrier-protein] and UDP-N-acetyl-alpha-D-glucosamine: step 1/6. Involved in the biosynthesis of lipid A, a phosphorylated glycolipid that anchors the lipopolysaccharide to the outer membrane of the cell. This Chlamydia abortus (strain DSM 27085 / S26/3) (Chlamydophila abortus) protein is Acyl-[acyl-carrier-protein]--UDP-N-acetylglucosamine O-acyltransferase.